A 732-amino-acid polypeptide reads, in one-letter code: DNA ligase (732 aa).

NAD(+)-binding positions include 47-51 (DAEYD), 96-97 (SI), and E133. The active-site N6-AMP-lysine intermediate is K135. The NAD(+) site is built by R156, E196, K317, and K341. C470, C473, C488, and C494 together coordinate Zn(2+). The 80-residue stretch at 653 to 732 (RATLPLAGKT…AGMLALLQGR (80 aa)) folds into the BRCT domain.

This sequence belongs to the NAD-dependent DNA ligase family. LigA subfamily. It depends on Mg(2+) as a cofactor. Requires Mn(2+) as cofactor.

It carries out the reaction NAD(+) + (deoxyribonucleotide)n-3'-hydroxyl + 5'-phospho-(deoxyribonucleotide)m = (deoxyribonucleotide)n+m + AMP + beta-nicotinamide D-nucleotide.. DNA ligase that catalyzes the formation of phosphodiester linkages between 5'-phosphoryl and 3'-hydroxyl groups in double-stranded DNA using NAD as a coenzyme and as the energy source for the reaction. It is essential for DNA replication and repair of damaged DNA. This is DNA ligase from Paracidovorax citrulli (strain AAC00-1) (Acidovorax citrulli).